Here is a 170-residue protein sequence, read N- to C-terminus: Large ribosomal subunit protein uL11 (170 aa).

The protein belongs to the universal ribosomal protein uL11 family. Part of the ribosomal stalk of the 50S ribosomal subunit. Interacts with L10 and the large rRNA to form the base of the stalk. L10 forms an elongated spine to which L12 dimers bind in a sequential fashion forming a multimeric L10(L12)X complex.

Forms part of the ribosomal stalk which helps the ribosome interact with GTP-bound translation factors. This is Large ribosomal subunit protein uL11 from Sulfolobus acidocaldarius (strain ATCC 33909 / DSM 639 / JCM 8929 / NBRC 15157 / NCIMB 11770).